The chain runs to 1174 residues: Tight junction protein 2 (1174 aa).

The PDZ 1 domain occupies 10-97 (TVTLQKDSKR…IAAIVVKRPR (88 aa)). Ser107, Ser127, Ser130, Ser140, Ser145, Ser147, Ser151, Ser173, Ser195, and Ser217 each carry phosphoserine. Residues 125 to 137 (GRSARSGYSERSR) are compositionally biased toward basic and acidic residues. The disordered stretch occupies residues 125–290 (GRSARSGYSE…AGQPDSDRPI (166 aa)). Residues 146–214 (RSWEDSPERG…DYGRPGERSH (69 aa)) are compositionally biased toward basic and acidic residues. The span at 220 to 235 (RGYDRGYDRGYDRGYD) shows a compositional bias: basic and acidic residues. Ser239 is subject to Phosphoserine. Basic and acidic residues-rich tracts occupy residues 243–266 (EYGRRTQPDARHAGSRSRSREHLR) and 274–288 (LRGRPDHAGQPDSDR). The region spanning 291 to 369 (GVLLMKSKAN…KLQLVVLRDS (79 aa)) is the PDZ 2 domain. Ser309, Ser382, Ser384, Ser390, Ser399, Ser408, Ser414, and Ser415 each carry phosphoserine. Positions 391 to 430 (EIESNRSFSPEERRQQYSDYDYHSSNEKLKERPNSREDMQ) are disordered. A compositionally biased stretch (basic and acidic residues) spans 399 to 430 (SPEERRQQYSDYDYHSSNEKLKERPNSREDMQ). Position 439 is a phosphothreonine (Thr439). The interval 456 to 490 (ENSKEPRYQEEPPAPQPKAAPRTFLRPSPEDEAIY) is disordered. Position 483 is a phosphoserine (Ser483). The region spanning 493 to 574 (NTKMVRFKKG…GEMVTILAQS (82 aa)) is the PDZ 3 domain. Tyr558 is modified (phosphotyrosine). The region spanning 588 to 653 (GDSFFIRSHF…PNKSRAEQMA (66 aa)) is the SH3 domain. Residues 679–860 (MKKNLRKSRE…WFGSLKDTIQ (182 aa)) form the Guanylate kinase-like domain. 2 positions are modified to phosphoserine: Ser686 and Ser886. Position 889 is a phosphothreonine (Thr889). A phosphoserine mark is found at Ser897 and Ser904. 2 disordered regions span residues 904–1065 (SDFE…VLGK) and 1100–1174 (DIYA…DTEL). 2 positions are modified to phosphothreonine: Thr909 and Thr917. Over residues 940–951 (VQHEESIRKPSP) the composition is skewed to basic and acidic residues. A phosphoserine mark is found at Ser950, Ser962, Ser970, Ser990, and Ser1052. Basic and acidic residues predominate over residues 978-1000 (EPPKAKTQNREESFDISRSHDYK). Residues 1044 to 1056 (ESEEVGEGSEEQE) show a composition bias toward acidic residues. A Phosphotyrosine modification is found at Tyr1102. Ser1131 and Ser1143 each carry phosphoserine. Positions 1150 to 1159 (YRQQLSEHSK) are enriched in basic and acidic residues. Residues 1172–1174 (TEL) form an interaction with SCRIB region.

The protein belongs to the MAGUK family. In terms of assembly, homodimer. Interacts (via PDZ2 domain) with TJP1/ZO1 (via PDZ2 domain). Interacts with UBN1. Interacts with SCRIB. Interacts with OCLN. Interacts with SAFB in the nucleus. Interacts with USP53 (via the C-terminal region). Interacts with claudins, including CLDN1, CLDN2, CLDN3, CLDN5 and CLDN7. Interacts with CLDN18. Interacts (via N-terminus) with CTNNA1. Phosphorylated.

The protein localises to the cell junction. It localises to the adherens junction. The protein resides in the cell membrane. Its subcellular location is the nucleus. It is found in the tight junction. Plays a role in tight junctions and adherens junctions. Acts as a positive regulator of RANKL-induced osteoclast differentiation, potentially via mediating downstream transcriptional activity. The protein is Tight junction protein 2 of Canis lupus familiaris (Dog).